The primary structure comprises 587 residues: Probable terpene synthase 12 (587 aa).

Residues Asp-338, Asp-342, and Glu-489 each contribute to the Mg(2+) site. The DDXXD motif signature appears at 338-342 (DDVYD).

Belongs to the terpene synthase family. Mg(2+) serves as cofactor.

Probable sesquiterpene synthase. The sequence is that of Probable terpene synthase 12 (TPS12) from Ricinus communis (Castor bean).